Reading from the N-terminus, the 319-residue chain is Cytochrome c biogenesis protein CcsA (319 aa).

Transmembrane regions (helical) follow at residues 15-35 (FSIVSIVITIHLITLVVNKIV), 44-64 (GMILTFSCITGLLVIRWIFAG), 71-91 (LYESLIFLSWSFYIIHMIPYF), 96-116 (LSAITAPGAIFTQGFATSGFF), 141-161 (MILAYAALLCGSLLSVALLVI), 223-243 (VISLGFLFLTMGILSGAVWAN), 258-278 (WAFITWTIFAIYLHIKTNINL), and 284-304 (AIVASIGFLIIWICYFGVNLL).

The protein belongs to the CcmF/CycK/Ccl1/NrfE/CcsA family. May interact with Ccs1.

Its subcellular location is the plastid. The protein resides in the chloroplast thylakoid membrane. Required during biogenesis of c-type cytochromes (cytochrome c6 and cytochrome f) at the step of heme attachment. The polypeptide is Cytochrome c biogenesis protein CcsA (Fagopyrum esculentum subsp. ancestrale (Wild buckwheat)).